Here is a 157-residue protein sequence, read N- to C-terminus: Xanthine-guanine phosphoribosyltransferase (157 aa).

Residues 42-43 (RG) and 93-101 (DDLVDTGNT) contribute to the 5-phospho-alpha-D-ribose 1-diphosphate site. Asp94 contacts Mg(2+). Residues Asp97 and Ile140 each contribute to the guanine site. 2 residues coordinate xanthine: Asp97 and Ile140. GMP contacts are provided by residues 97–101 (DTGNT) and 139–140 (WI).

The protein belongs to the purine/pyrimidine phosphoribosyltransferase family. XGPT subfamily. In terms of assembly, homotetramer. Requires Mg(2+) as cofactor.

Its subcellular location is the cell inner membrane. It carries out the reaction GMP + diphosphate = guanine + 5-phospho-alpha-D-ribose 1-diphosphate. The catalysed reaction is XMP + diphosphate = xanthine + 5-phospho-alpha-D-ribose 1-diphosphate. It catalyses the reaction IMP + diphosphate = hypoxanthine + 5-phospho-alpha-D-ribose 1-diphosphate. Its pathway is purine metabolism; GMP biosynthesis via salvage pathway; GMP from guanine: step 1/1. It participates in purine metabolism; XMP biosynthesis via salvage pathway; XMP from xanthine: step 1/1. Purine salvage pathway enzyme that catalyzes the transfer of the ribosyl-5-phosphate group from 5-phospho-alpha-D-ribose 1-diphosphate (PRPP) to the N9 position of the 6-oxopurines guanine and xanthine to form the corresponding ribonucleotides GMP (guanosine 5'-monophosphate) and XMP (xanthosine 5'-monophosphate), with the release of PPi. To a lesser extent, also acts on hypoxanthine. The chain is Xanthine-guanine phosphoribosyltransferase from Actinobacillus pleuropneumoniae serotype 5b (strain L20).